The following is a 155-amino-acid chain: Aspartate 1-decarboxylase (155 aa).

Ser24 acts as the Schiff-base intermediate with substrate; via pyruvic acid in catalysis. Ser24 is subject to Pyruvic acid (Ser). Thr56 is a binding site for substrate. Tyr57 acts as the Proton donor in catalysis. Residue Gly72–Ala74 participates in substrate binding.

The protein belongs to the PanD family. As to quaternary structure, heterooctamer of four alpha and four beta subunits. It depends on pyruvate as a cofactor. Post-translationally, is synthesized initially as an inactive proenzyme, which is activated by self-cleavage at a specific serine bond to produce a beta-subunit with a hydroxyl group at its C-terminus and an alpha-subunit with a pyruvoyl group at its N-terminus.

The protein resides in the cytoplasm. It catalyses the reaction L-aspartate + H(+) = beta-alanine + CO2. The protein operates within cofactor biosynthesis; (R)-pantothenate biosynthesis; beta-alanine from L-aspartate: step 1/1. Catalyzes the pyruvoyl-dependent decarboxylation of aspartate to produce beta-alanine. The protein is Aspartate 1-decarboxylase of Methylocella silvestris (strain DSM 15510 / CIP 108128 / LMG 27833 / NCIMB 13906 / BL2).